An 80-amino-acid chain; its full sequence is Acyl carrier protein (80 aa).

The 76-residue stretch at 2–77 folds into the Carrier domain; it reads SDTLKRLQKI…DALNYIENKI (76 aa). S37 bears the O-(pantetheine 4'-phosphoryl)serine mark.

It belongs to the acyl carrier protein (ACP) family. Post-translationally, 4'-phosphopantetheine is transferred from CoA to a specific serine of apo-ACP by AcpS. This modification is essential for activity because fatty acids are bound in thioester linkage to the sulfhydryl of the prosthetic group.

The protein localises to the plastid. The protein resides in the chloroplast. It participates in lipid metabolism; fatty acid biosynthesis. Functionally, carrier of the growing fatty acid chain in fatty acid biosynthesis. In Cylindrotheca sp. (strain N1) (Marine diatom), this protein is Acyl carrier protein.